A 568-amino-acid chain; its full sequence is Periplasmic pectate lyase (568 aa).

Positions 1-19 (MKRFALSLLAGLVALQASA) are cleaved as a signal peptide.

This sequence belongs to the polysaccharide lyase 2 family.

Its subcellular location is the periplasm. It catalyses the reaction Eliminative cleavage of (1-&gt;4)-alpha-D-galacturonan to give oligosaccharides with 4-deoxy-alpha-D-galact-4-enuronosyl groups at their non-reducing ends.. The protein operates within glycan metabolism; pectin degradation; 2-dehydro-3-deoxy-D-gluconate from pectin: step 2/5. The sequence is that of Periplasmic pectate lyase (pelB) from Pectobacterium carotovorum subsp. carotovorum (Erwinia carotovora subsp. carotovora).